The primary structure comprises 1070 residues: DNA-directed RNA polymerase subunit beta (1070 aa).

It belongs to the RNA polymerase beta chain family. As to quaternary structure, in plastids the minimal PEP RNA polymerase catalytic core is composed of four subunits: alpha, beta, beta', and beta''. When a (nuclear-encoded) sigma factor is associated with the core the holoenzyme is formed, which can initiate transcription.

The protein localises to the plastid. It localises to the chloroplast. The catalysed reaction is RNA(n) + a ribonucleoside 5'-triphosphate = RNA(n+1) + diphosphate. DNA-dependent RNA polymerase catalyzes the transcription of DNA into RNA using the four ribonucleoside triphosphates as substrates. In Gossypium barbadense (Sea Island cotton), this protein is DNA-directed RNA polymerase subunit beta.